The chain runs to 287 residues: Co-chaperone protein DjlA (287 aa).

Over 1–6 (MQIFGK) the chain is Periplasmic. A helical transmembrane segment spans residues 7 to 30 (ILGAFFGFLFGGVFGALFGLFIGH). Over 31 to 287 (QFDKARRLSQ…DLIKKEKGFK (257 aa)) the chain is Cytoplasmic. Positions 192–213 (GGFGGQQHQSHHSSSHGGWQQA) are disordered. A J domain is found at 221–287 (DAYKILGIDA…DLIKKEKGFK (67 aa)).

In terms of assembly, homodimer.

Its subcellular location is the cell inner membrane. In terms of biological role, regulatory DnaK co-chaperone. Direct interaction between DnaK and DjlA is needed for the induction of the wcaABCDE operon, involved in the synthesis of a colanic acid polysaccharide capsule, possibly through activation of the RcsB/RcsC phosphotransfer signaling pathway. The colanic acid capsule may help the bacterium survive conditions outside the host. In Vibrio vulnificus (strain CMCP6), this protein is Co-chaperone protein DjlA.